The chain runs to 618 residues: Camphene synthase, chloroplastic (618 aa).

Residues 1 to 51 constitute a chloroplast transit peptide; it reads MALLSITPLVSRSCLSSSHEIKALRRTIPTLGICRPGKSVAHSINMCLTSV. Mg(2+) contacts are provided by Asp-369, Asp-373, and Asp-521. The DDXXD motif signature appears at 369–373; it reads DDMYD.

This sequence belongs to the terpene synthase family. Tpsd subfamily. Mg(2+) is required as a cofactor. The cofactor is Mn(2+). It depends on K(+) as a cofactor.

The protein resides in the plastid. Its subcellular location is the chloroplast. It carries out the reaction (2E)-geranyl diphosphate = (1S,4R)-camphene + diphosphate. Its pathway is terpene metabolism; oleoresin biosynthesis. Its function is as follows. Involved in defensive oleoresin formation in conifers in response to insect attack or other injury. Involved in monoterpene (C10) olefins biosynthesis. The chain is Camphene synthase, chloroplastic (ag6) from Abies grandis (Grand fir).